A 73-amino-acid polypeptide reads, in one-letter code: Translational regulator CsrA (73 aa).

This sequence belongs to the CsrA/RsmA family. Homodimer; the beta-strands of each monomer intercalate to form a hydrophobic core, while the alpha-helices form wings that extend away from the core.

It localises to the cytoplasm. A translational regulator that binds mRNA to regulate translation initiation and/or mRNA stability. Usually binds in the 5'-UTR at or near the Shine-Dalgarno sequence preventing ribosome-binding, thus repressing translation. Its main target seems to be the major flagellin gene, while its function is anatagonized by FliW. In Clostridium kluyveri (strain NBRC 12016), this protein is Translational regulator CsrA.